The primary structure comprises 848 residues: Translation initiation factor IF-2 (848 aa).

Residues 1–10 (MSENNNDKIT) are compositionally biased toward basic and acidic residues. Disordered regions lie at residues 1–79 (MSEN…EKPV) and 121–163 (AERQ…LFSS). Residues 17–33 (LKRSGSETNTVKQNFNH) are compositionally biased toward polar residues. The span at 121 to 138 (AERQAAEKQAKESEEGLH) shows a compositional bias: basic and acidic residues. The span at 149–163 (KSSSNTTKPTPLFSS) shows a compositional bias: polar residues. The tr-type G domain maps to 346 to 513 (TRPPIVTIMG…AILLQAEILD (168 aa)). Residues 355-362 (GHVDHGKT) form a G1 region. 355–362 (GHVDHGKT) provides a ligand contact to GTP. The segment at 380 to 384 (GITQH) is G2. The segment at 401–404 (DTPG) is G3. Residues 401–405 (DTPGH) and 455–458 (NKID) contribute to the GTP site. The tract at residues 455–458 (NKID) is G4. A G5 region spans residues 491-493 (SAK).

This sequence belongs to the TRAFAC class translation factor GTPase superfamily. Classic translation factor GTPase family. IF-2 subfamily.

The protein localises to the cytoplasm. In terms of biological role, one of the essential components for the initiation of protein synthesis. Protects formylmethionyl-tRNA from spontaneous hydrolysis and promotes its binding to the 30S ribosomal subunits. Also involved in the hydrolysis of GTP during the formation of the 70S ribosomal complex. This Bartonella bacilliformis (strain ATCC 35685 / KC583 / Herrer 020/F12,63) protein is Translation initiation factor IF-2.